A 613-amino-acid chain; its full sequence is V-type proton ATPase catalytic subunit A isoform 1 (613 aa).

240–247 (GAFGCGKT) is a binding site for ATP.

It belongs to the ATPase alpha/beta chains family. As to quaternary structure, V-ATPase is a heteromultimeric enzyme composed of a peripheral catalytic V1 complex (main components: subunits A, B, C, D, E, and F) attached to an integral membrane V0 proton pore complex (main component: the proteolipid protein).

It carries out the reaction ATP + H2O + 4 H(+)(in) = ADP + phosphate + 5 H(+)(out). Functionally, catalytic subunit of the peripheral V1 complex of vacuolar ATPase. V-ATPase vacuolar ATPase is responsible for acidifying a variety of intracellular compartments in eukaryotic cells. The polypeptide is V-type proton ATPase catalytic subunit A isoform 1 (Acetabularia acetabulum (Mermaid's wine glass)).